The following is a 1012-amino-acid chain: Isoleucine--tRNA ligase, mitochondrial (1012 aa).

The transit peptide at 1 to 48 (MHWGLCPRGPGAAAVAAAGSFWGPARLPSRLGCLGMTRRLVVRSVAGA) directs the protein to the mitochondrion. At K56 the chain carries N6-succinyllysine. K74 is subject to N6-acetyllysine; alternate. Residue K74 is modified to N6-succinyllysine; alternate. The 'HIGH' region signature appears at 116–126 (PYANGDPHVGH). K194 is modified (N6-succinyllysine). K233 carries the post-translational modification N6-acetyllysine. K241 bears the N6-acetyllysine; alternate mark. Position 241 is an N6-succinyllysine; alternate (K241). Residues K479 and K500 each carry the N6-succinyllysine modification. Residues K664 and K667 each contribute to the ATP site. The 'KMSKS' region motif lies at 664 to 668 (KMSKS). The residue at position 725 (K725) is an N6-acetyllysine. N6-acetyllysine; alternate is present on residues K775 and K781. N6-succinyllysine; alternate occurs at positions 775 and 781.

The protein belongs to the class-I aminoacyl-tRNA synthetase family.

It localises to the mitochondrion matrix. The catalysed reaction is tRNA(Ile) + L-isoleucine + ATP = L-isoleucyl-tRNA(Ile) + AMP + diphosphate. In terms of biological role, aminoacyl-tRNA synthetase that catalyzes the specific attachment of isoleucine to its cognate tRNA (tRNA(Ile)). This chain is Isoleucine--tRNA ligase, mitochondrial, found in Mus musculus (Mouse).